A 200-amino-acid chain; its full sequence is Outer-membrane lipoprotein carrier protein (200 aa).

Residues 1 to 18 (MKAVVFAMVMAVSFNVFA) form the signal peptide.

The protein belongs to the LolA family. In terms of assembly, monomer.

The protein localises to the periplasm. In terms of biological role, participates in the translocation of lipoproteins from the inner membrane to the outer membrane. Only forms a complex with a lipoprotein if the residue after the N-terminal Cys is not an aspartate (The Asp acts as a targeting signal to indicate that the lipoprotein should stay in the inner membrane). This chain is Outer-membrane lipoprotein carrier protein, found in Idiomarina loihiensis (strain ATCC BAA-735 / DSM 15497 / L2-TR).